The primary structure comprises 65 residues: MSNQNIPQLSEYQTSVSQVAVTPPPKPETPQIFEYQTSDSIVNNPRPFYNSDLEFDDIDMYLLPN.

The span at 1 to 20 (MSNQNIPQLSEYQTSVSQVA) shows a compositional bias: polar residues. Positions 1–31 (MSNQNIPQLSEYQTSVSQVAVTPPPKPETPQ) are disordered.

This Vaccinia virus (strain Copenhagen) (VACV) protein is 7 kDa A-type inclusion protein.